Here is an 85-residue protein sequence, read N- to C-terminus: Large ribosomal subunit protein bL27 (85 aa).

Residues 1–10 (MAQKKGGGST) show a composition bias toward gly residues. A disordered region spans residues 1-20 (MAQKKGGGSTRNGRDSQPKM).

This sequence belongs to the bacterial ribosomal protein bL27 family.

This chain is Large ribosomal subunit protein bL27, found in Methylibium petroleiphilum (strain ATCC BAA-1232 / LMG 22953 / PM1).